A 501-amino-acid chain; its full sequence is Aspartyl/glutamyl-tRNA(Asn/Gln) amidotransferase subunit B (501 aa).

The tract at residues 272–291 (QETRHYQETDGTTSKGRPKE) is disordered.

This sequence belongs to the GatB/GatE family. GatB subfamily. As to quaternary structure, heterotrimer of A, B and C subunits.

The catalysed reaction is L-glutamyl-tRNA(Gln) + L-glutamine + ATP + H2O = L-glutaminyl-tRNA(Gln) + L-glutamate + ADP + phosphate + H(+). It carries out the reaction L-aspartyl-tRNA(Asn) + L-glutamine + ATP + H2O = L-asparaginyl-tRNA(Asn) + L-glutamate + ADP + phosphate + 2 H(+). In terms of biological role, allows the formation of correctly charged Asn-tRNA(Asn) or Gln-tRNA(Gln) through the transamidation of misacylated Asp-tRNA(Asn) or Glu-tRNA(Gln) in organisms which lack either or both of asparaginyl-tRNA or glutaminyl-tRNA synthetases. The reaction takes place in the presence of glutamine and ATP through an activated phospho-Asp-tRNA(Asn) or phospho-Glu-tRNA(Gln). This Corynebacterium efficiens (strain DSM 44549 / YS-314 / AJ 12310 / JCM 11189 / NBRC 100395) protein is Aspartyl/glutamyl-tRNA(Asn/Gln) amidotransferase subunit B.